A 339-amino-acid polypeptide reads, in one-letter code: MAETSTIGSGVALVGCGSATPSQRISNDQLGQRVDTSDAWIRSRTGISARRVIGPDETLTGLSHQAAANALTMAGWEPESVDLIILATSTPDDLFGSAPQLQAILGARQAVAFDLTAACSGFLFALITAAQFLRTGAMRRALVIGADQLSRWVDWDDRRSCVLFGDGAGAVALEATSAAQNGLLGFQLKSDGSRGDCLNLPQVQNHLSLVAGNSHQQGGFKPIQMNGQEVYKFAVREVPAILQTLLKATNTAPESLDWLLLHQANQRILDAVANRFAIPQAKVLSNLAEYGNTSAATIPLMLDEAVQDGRIKPGQLIASSGFGAGLSWGAALIRWHGPI.

Residues C119 and H262 contribute to the active site. An ACP-binding region spans residues 263-267 (QANQR). The active site involves N292.

Belongs to the thiolase-like superfamily. FabH family. As to quaternary structure, homodimer.

It is found in the cytoplasm. It carries out the reaction malonyl-[ACP] + acetyl-CoA + H(+) = 3-oxobutanoyl-[ACP] + CO2 + CoA. Its pathway is lipid metabolism; fatty acid biosynthesis. Functionally, catalyzes the condensation reaction of fatty acid synthesis by the addition to an acyl acceptor of two carbons from malonyl-ACP. Catalyzes the first condensation reaction which initiates fatty acid synthesis and may therefore play a role in governing the total rate of fatty acid production. Possesses both acetoacetyl-ACP synthase and acetyl transacylase activities. Its substrate specificity determines the biosynthesis of branched-chain and/or straight-chain of fatty acids. The sequence is that of Beta-ketoacyl-[acyl-carrier-protein] synthase III from Prochlorococcus marinus (strain MIT 9313).